The sequence spans 460 residues: NADH-ubiquinone oxidoreductase chain 4 (460 aa).

13 helical membrane passes run 20 to 42, 61 to 81, 94 to 113, 117 to 139, 148 to 168, 195 to 215, 225 to 245, 258 to 278, 285 to 304, 308 to 330, 351 to 371, 394 to 414, and 436 to 456; these read AKWL…LSWL, PLST…VLAS, RTYI…AFGA, IMFY…RWGN, TYFL…LLLL, LWWA…GVHL, PIAG…YGMM, LAYP…SICL, SLIA…GILI, WGFT…LFCL, MILP…LALP, LLLT…LFLM, and LLIT…ELMW.

The protein belongs to the complex I subunit 4 family.

The protein localises to the mitochondrion membrane. The enzyme catalyses a ubiquinone + NADH + 5 H(+)(in) = a ubiquinol + NAD(+) + 4 H(+)(out). Its function is as follows. Core subunit of the mitochondrial membrane respiratory chain NADH dehydrogenase (Complex I) that is believed to belong to the minimal assembly required for catalysis. Complex I functions in the transfer of electrons from NADH to the respiratory chain. The immediate electron acceptor for the enzyme is believed to be ubiquinone. The protein is NADH-ubiquinone oxidoreductase chain 4 (MT-ND4) of Salmo salar (Atlantic salmon).